Consider the following 60-residue polypeptide: Large ribosomal subunit protein uL30 (60 aa).

It belongs to the universal ribosomal protein uL30 family. Part of the 50S ribosomal subunit.

This chain is Large ribosomal subunit protein uL30, found in Bacillus cereus (strain G9842).